We begin with the raw amino-acid sequence, 5100 residues long: Hemicentin-2 (5100 aa).

A signal peptide spans 1–19 (MTPGAQLLPLLVAISTAVA). The VWFA domain occupies 37-211 (DATLAFVFDV…QVSEVLKWVE (175 aa)). N-linked (GlcNAc...) asparagine glycosylation is found at Asn-330, Asn-347, Asn-380, Asn-479, Asn-526, Asn-548, and Asn-675. 43 consecutive Ig-like C2-type domains span residues 426–515 (PGVP…IVIT), 517–601 (PPPQ…RATT), 609–692 (PQVS…ETVT), 699–782 (PSVS…IQLV), 787–877 (PRLT…LVVT), 882–968 (PQIA…VELV), 973–1058 (PRIH…MWLS), 1063–1156 (PMIK…YVLR), 1161–1239 (PQVQ…WKLE), 1246–1335 (PHWG…AKLV), 1340–1437 (PSIR…FNLA), 1442–1531 (PSLL…FQLS), 1536–1624 (PTIW…TSLE), 1629–1717 (PTIE…YSVE), 1722–1810 (PQLL…VEVS), 1825–1913 (SAHH…KDVT), 1920–2008 (PNIE…LRVN), 2011–2100 (PRIT…VILQ), 2105–2189 (PSIL…KHFN), 2196–2285 (PAFP…QSLE), 2290–2379 (PQVT…FALS), 2384–2473 (PHLT…FSVE), 2478–2566 (PSIE…TQLS), 2571–2662 (PTIL…YHVE), 2667–2758 (PSIS…QDFN), 2781–2871 (PHEE…YELL), 2875–2964 (PPVI…KLFT), 2971–3058 (PQIS…VQLN), 3063–3153 (PSFK…FVLA), 3157–3245 (PPTF…FVVS), 3250–3340 (PQIQ…HTVN), 3345–3432 (PTIK…RNFT), 3438–3523 (PPIL…FQLT), 3528–3609 (PHIE…FRVR), 3614–3702 (PNVV…FRVE), 3707–3793 (PTIQ…LDLR), 3798–3886 (PAIA…YQVT), 3891–3977 (PTIA…MVLT), 3982–4067 (PVVK…TRLV), 4071–4158 (PPVI…VHLT), 4163–4244 (PVLT…QAVS), 4252–4336 (PVLQ…KVVT), and 4343–4428 (PVFQ…ALLA). The cysteines at positions 449 and 497 are disulfide-linked. 6 cysteine pairs are disulfide-bonded: Cys-539–Cys-588, Cys-630–Cys-678, Cys-720–Cys-766, Cys-808–Cys-859, Cys-903–Cys-952, and Cys-994–Cys-1042. 3 positions are modified to omega-N-methylarginine: Arg-909, Arg-914, and Arg-915. N-linked (GlcNAc...) asparagine glycans are attached at residues Asn-1024 and Asn-1068. 2 cysteine pairs are disulfide-bonded: Cys-1091-Cys-1140 and Cys-1182-Cys-1225. An N-linked (GlcNAc...) asparagine glycan is attached at Asn-1264. The segment at 1265-1293 (ASLPCPAQGTPKPRITWRRGPSSEPLNGR) is disordered. Residues Cys-1269 and Cys-1319 are joined by a disulfide bond. Residue Asn-1350 is glycosylated (N-linked (GlcNAc...) asparagine). Intrachain disulfides connect Cys-1363–Cys-1421 and Cys-1465–Cys-1515. Asn-1542 is a glycosylation site (N-linked (GlcNAc...) asparagine). 4 cysteine pairs are disulfide-bonded: Cys-1559–Cys-1608, Cys-1653–Cys-1701, Cys-1745–Cys-1794, and Cys-1846–Cys-1899. 2 N-linked (GlcNAc...) asparagine glycosylation sites follow: Asn-1676 and Asn-1787. A glycan (N-linked (GlcNAc...) asparagine) is linked at Asn-1934. Disulfide bonds link Cys-1941/Cys-1990 and Cys-2033/Cys-2084. N-linked (GlcNAc...) asparagine glycosylation is found at Asn-2034, Asn-2113, and Asn-2119. Cystine bridges form between Cys-2126–Cys-2175 and Cys-2218–Cys-2269. Residues Asn-2309, Asn-2315, Asn-2345, and Asn-2395 are each glycosylated (N-linked (GlcNAc...) asparagine). A disulfide bond links Cys-2314 and Cys-2363. The cysteines at positions 2408 and 2457 are disulfide-linked. 5 N-linked (GlcNAc...) asparagine glycosylation sites follow: Asn-2469, Asn-2502, Asn-2541, Asn-2606, and Asn-2688. 2 cysteine pairs are disulfide-bonded: Cys-2501/Cys-2550 and Cys-2597/Cys-2646. 2 disulfides stabilise this stretch: Cys-2695–Cys-2744 and Cys-2806–Cys-2855. Asn-2892 carries an N-linked (GlcNAc...) asparagine glycan. Cys-2901 and Cys-2950 are oxidised to a cystine. Asn-2986 is a glycosylation site (N-linked (GlcNAc...) asparagine). Cystine bridges form between Cys-2993–Cys-3042, Cys-3088–Cys-3137, Cys-3180–Cys-3229, Cys-3273–Cys-3324, and Cys-3369–Cys-3418. N-linked (GlcNAc...) asparagine glycosylation is present at Asn-3430. 3 cysteine pairs are disulfide-bonded: Cys-3462–Cys-3507, Cys-3551–Cys-3593, and Cys-3637–Cys-3686. Asn-3560 and Asn-3575 each carry an N-linked (GlcNAc...) asparagine glycan. N-linked (GlcNAc...) asparagine glycosylation is found at Asn-3717 and Asn-3721. Cys-3728 and Cys-3777 are disulfide-bonded. The N-linked (GlcNAc...) asparagine glycan is linked to Asn-3806. 7 cysteine pairs are disulfide-bonded: Cys-3819–Cys-3870, Cys-3912–Cys-3961, Cys-4003–Cys-4051, Cys-4093–Cys-4142, Cys-4184–Cys-4231, Cys-4274–Cys-4322, and Cys-4364–Cys-4412. N-linked (GlcNAc...) asparagine glycosylation occurs at Asn-4304. The 223-residue stretch at 4432-4654 (EPRGSRGSMT…QTEENEVGCP (223 aa)) folds into the Nidogen G2 beta-barrel domain. N-linked (GlcNAc...) asparagine glycans are attached at residues Asn-4455 and Asn-4601. One can recognise an EGF-like 1; calcium-binding domain in the interval 4668 to 4708 (DKDECSGGPSPCSHTCRNAPGHFSCSCPTGFSLAWDHRNCR). 11 disulfide bridges follow: Cys-4672–Cys-4683, Cys-4679–Cys-4692, Cys-4694–Cys-4707, Cys-4713–Cys-4726, Cys-4720–Cys-4735, Cys-4739–Cys-4752, Cys-4758–Cys-4771, Cys-4765–Cys-4780, Cys-4801–Cys-4812, Cys-4808–Cys-4821, and Cys-4823–Cys-4836. In terms of domain architecture, EGF-like 2; calcium-binding spans 4709 to 4753 (DVDECAGNTHLCQEEQRCVNLLGSYNCLASCRPGFRVTADGSNCE). The EGF-like 3; calcium-binding domain occupies 4754–4789 (DVDECLEQLDECHYNQLCENTPGGHHCGCPRGYRQQ). The 41-residue stretch at 4797-4837 (DINECLQLPTPCVYQCQNLQGSYRCLCPPGQTLLRDGRTCI) folds into the EGF-like 4; calcium-binding domain. Asn-4845 carries an N-linked (GlcNAc...) asparagine glycan. The EGF-like 5; calcium-binding domain occupies 4904–4943 (DLDECRVRSLCQHACQNTEGSYYCLCPSGYRLLPSGKNCQ). 3 disulfides stabilise this stretch: Cys-4908–Cys-4918, Cys-4914–Cys-4927, and Cys-4929–Cys-4942. An N-linked (GlcNAc...) asparagine glycan is attached at Asn-5035.

Reported to be phosphorylated; however as this position is extracellular, the in vivo relevance is unsure. In neonatal skin, localized in the pericellular space of basal epidermal keratinocytes (at protein level). In adult skin, restricted to basal keratinocytes of hair follicles and the interfollicular epidermis. Absent from the myotendinous junction but present in skeletal muscle (at protein level). Expressed in the pericellular extracellular matrix of epithelial cells in a number of tissues including embryonic trophectoderm and adult skin and tongue. Also present in the extracellular matrix of some, but not all, blood vessels. Expressed primarily in epithelial cells in the embryonic epidermis, lung, intestine, skeletal hindlimb muscle, tongue and the muscular layers of the esophagus.

The protein resides in the secreted. It localises to the extracellular space. It is found in the extracellular matrix. Its subcellular location is the cleavage furrow. In Mus musculus (Mouse), this protein is Hemicentin-2 (Hmcn2).